Here is a 907-residue protein sequence, read N- to C-terminus: Sensor protein GacS (907 aa).

3 helical membrane passes run 9-25, 84-101, and 159-178; these read ASLMAAMLGGYFTWMQL, VLAHAGPTMISPSPIGSG, and LFASLLLILTGLAFTATLAV. Residues 182–234 form the HAMP domain; that stretch reads RTINGPMSQIKQAVSQLKDGNLETRLPPLGSRELDELASGINRMAATLQNAQE. One can recognise a Histidine kinase domain in the interval 281 to 502; it reads NMSHEIRTPL…EFWISLKLPK (222 aa). A Phosphohistidine; by autocatalysis modification is found at H284. Positions 658–777 constitute a Response regulatory domain; the sequence is RVLCVDDNPA…QLAQVVLKWT (120 aa). At D707 the chain carries 4-aspartylphosphate. In terms of domain architecture, HPt spans 814–907; sequence KADLAADMLA…RLEAEARVMA (94 aa). Position 853 is a phosphohistidine (H853).

Post-translationally, activation requires a sequential transfer of a phosphate group from a His in the primary transmitter domain, to an Asp in the receiver domain and to a His in the secondary transmitter domain.

It is found in the cell inner membrane. The catalysed reaction is ATP + protein L-histidine = ADP + protein N-phospho-L-histidine.. In terms of biological role, forms part of a two-component regulatory system GacA/GacS(LemA). May be involved in lesion formation, swarming and in the production of extracellular protease, syringomycin and N-acyl-L-homoserine lactone (acyl-HSL). Required for pathogenicity on bean. This is Sensor protein GacS (gacS) from Pseudomonas syringae pv. syringae.